The chain runs to 40 residues: Large ribosomal subunit protein bL36 (40 aa).

The protein belongs to the bacterial ribosomal protein bL36 family.

This chain is Large ribosomal subunit protein bL36, found in Corynebacterium kroppenstedtii (strain DSM 44385 / JCM 11950 / CIP 105744 / CCUG 35717).